Here is a 267-residue protein sequence, read N- to C-terminus: Ribosomal RNA small subunit methyltransferase A (267 aa).

6 residues coordinate S-adenosyl-L-methionine: asparagine 18, leucine 20, glycine 45, glutamate 66, aspartate 91, and asparagine 112.

This sequence belongs to the class I-like SAM-binding methyltransferase superfamily. rRNA adenine N(6)-methyltransferase family. RsmA subfamily.

It is found in the cytoplasm. The catalysed reaction is adenosine(1518)/adenosine(1519) in 16S rRNA + 4 S-adenosyl-L-methionine = N(6)-dimethyladenosine(1518)/N(6)-dimethyladenosine(1519) in 16S rRNA + 4 S-adenosyl-L-homocysteine + 4 H(+). Functionally, specifically dimethylates two adjacent adenosines (A1518 and A1519) in the loop of a conserved hairpin near the 3'-end of 16S rRNA in the 30S particle. May play a critical role in biogenesis of 30S subunits. This is Ribosomal RNA small subunit methyltransferase A from Shewanella pealeana (strain ATCC 700345 / ANG-SQ1).